The primary structure comprises 493 residues: Probable NADPH:adrenodoxin oxidoreductase, mitochondrial (493 aa).

FAD is bound by residues serine 26, glutamate 48, leucine 56, and isoleucine 100. NADP(+) is bound by residues 177–180 (NGNV), 223–224 (RR), and glutamate 235. Residues tryptophan 407 and 414–416 (GVI) each bind FAD. Glycine 414 is an NADP(+) binding site.

The protein belongs to the ferredoxin--NADP reductase type 1 family. It depends on FAD as a cofactor.

It localises to the mitochondrion inner membrane. The catalysed reaction is 2 reduced [adrenodoxin] + NADP(+) + H(+) = 2 oxidized [adrenodoxin] + NADPH. Functionally, adrenodoxin reductase transfers electrons from NADPH to adrenodoxin, which is involved in heme A biosynthesis and in iron-sulfur cluster assembly. Involved in the electron transfer to heme A synthase COX15, a heme protein that catalyzes the conversion of heme O to heme A. Required for the de novo synthesis of Fe-S clusters on iron sulfur cluster assembly protein ISU1. Involved in electron delivery for Fe-S cluster synthesis. Essential for coenzyme Q biosynthesis. May be involved in the electron transfer required for the hydroxylation reaction performed by COQ6. May play a role in cellular and mitochondrial iron homeostasis. In Saccharomyces cerevisiae (strain ATCC 204508 / S288c) (Baker's yeast), this protein is Probable NADPH:adrenodoxin oxidoreductase, mitochondrial.